A 130-amino-acid chain; its full sequence is Small ribosomal subunit protein uS9 (130 aa).

This sequence belongs to the universal ribosomal protein uS9 family.

This Pseudomonas paraeruginosa (strain DSM 24068 / PA7) (Pseudomonas aeruginosa (strain PA7)) protein is Small ribosomal subunit protein uS9.